Here is a 394-residue protein sequence, read N- to C-terminus: 1-deoxy-D-xylulose 5-phosphate reductoisomerase (394 aa).

Positions 14, 15, 16, 17, 40, and 128 each coordinate NADPH. 1-deoxy-D-xylulose 5-phosphate is bound at residue Lys-129. Glu-130 provides a ligand contact to NADPH. Asp-154 provides a ligand contact to Mn(2+). 1-deoxy-D-xylulose 5-phosphate contacts are provided by Ser-155, Glu-156, Ser-180, and His-203. Glu-156 serves as a coordination point for Mn(2+). An NADPH-binding site is contributed by Gly-209. Residues Ser-216, Asn-221, Lys-222, and Glu-225 each contribute to the 1-deoxy-D-xylulose 5-phosphate site. Glu-225 is a Mn(2+) binding site.

The protein belongs to the DXR family. The cofactor is Mg(2+). It depends on Mn(2+) as a cofactor.

It catalyses the reaction 2-C-methyl-D-erythritol 4-phosphate + NADP(+) = 1-deoxy-D-xylulose 5-phosphate + NADPH + H(+). It participates in isoprenoid biosynthesis; isopentenyl diphosphate biosynthesis via DXP pathway; isopentenyl diphosphate from 1-deoxy-D-xylulose 5-phosphate: step 1/6. In terms of biological role, catalyzes the NADPH-dependent rearrangement and reduction of 1-deoxy-D-xylulose-5-phosphate (DXP) to 2-C-methyl-D-erythritol 4-phosphate (MEP). This Xylella fastidiosa (strain M12) protein is 1-deoxy-D-xylulose 5-phosphate reductoisomerase.